We begin with the raw amino-acid sequence, 1262 residues long: Ras-specific guanine nucleotide-releasing factor 1 (1262 aa).

The region spanning 22 to 130 (DGTRKGYLSK…WVAAIARASY (109 aa)) is the PH 1 domain. Position 71 is a phosphoserine; by PLK2 (serine 71). Positions 208 to 233 (KKIKKVQSFLRGWLCRRKWKNIIQDY) constitute an IQ domain. The DH domain maps to 244–430 (KRNQVVFSML…EELSRIMHDE (187 aa)). Residues 460–588 (TFVRQGSLMQ…WTSDIIQCVD (129 aa)) enclose the PH 2 domain. Residues serine 581 and serine 617 each carry the phosphoserine; by PLK2 modification. The N-terminal Ras-GEF domain occupies 635 to 749 (KVLQIRYASV…RRRKLSLNIP (115 aa)). A disordered region spans residues 714–738 (DAPKSPRASRKFSSPPPLAIGTSSP). Serine 745 carries the post-translational modification Phosphoserine. At serine 766 the chain carries Phosphoserine; by PLK2. Residues 800 to 854 (EEIDVPATIPEKPGELSASRKHSSDVLKEESEDDQNHSDEDNTEVSPVKSPPTPK) form a disordered region. A compositionally biased stretch (basic and acidic residues) spans 821-839 (HSSDVLKEESEDDQNHSDE). In terms of domain architecture, Ras-GEF spans 1027–1259 (PALEIAEQLT…YESSLLIEPK (233 aa)).

Homooligomer and heterooligomer with RASGRF2. Interacts with USP8, thereby regulating its stability. Post-translationally, phosphorylated by PLK2, leading to ubiquitination and degradation by the proteasome. In terms of processing, ubiquitinated and degraded following phosphorylation by PLK2. Phosphorylated by SRC and LCK. Phosphorylation by LCK increases its capacity to stimulate the GDP/GTP exchange on Ras, whereas its phosphorylation by SRC seems not to have an effect on stimulation activity. As to expression, brain.

Functionally, promotes the exchange of Ras-bound GDP by GTP. The polypeptide is Ras-specific guanine nucleotide-releasing factor 1 (Rasgrf1) (Mus musculus (Mouse)).